Here is a 291-residue protein sequence, read N- to C-terminus: 4-diphosphocytidyl-2-C-methyl-D-erythritol kinase (291 aa).

Lysine 11 is an active-site residue. 97–107 lines the ATP pocket; sequence PVAAGIGGGSS. Residue aspartate 139 is part of the active site.

The protein belongs to the GHMP kinase family. IspE subfamily.

It carries out the reaction 4-CDP-2-C-methyl-D-erythritol + ATP = 4-CDP-2-C-methyl-D-erythritol 2-phosphate + ADP + H(+). It participates in isoprenoid biosynthesis; isopentenyl diphosphate biosynthesis via DXP pathway; isopentenyl diphosphate from 1-deoxy-D-xylulose 5-phosphate: step 3/6. Catalyzes the phosphorylation of the position 2 hydroxy group of 4-diphosphocytidyl-2C-methyl-D-erythritol. The polypeptide is 4-diphosphocytidyl-2-C-methyl-D-erythritol kinase (Methylorubrum extorquens (strain CM4 / NCIMB 13688) (Methylobacterium extorquens)).